We begin with the raw amino-acid sequence, 440 residues long: T-box transcription factor T homolog 2 (440 aa).

Residues 44 to 215 (LWEKFKSLTN…HNPFAKAFLD (172 aa)) constitute a DNA-binding region (T-box). Disordered regions lie at residues 282–303 (APYPHPYQRSSPPTNYGHDTAA) and 393–440 (TTAS…MPSM). Positions 409 to 440 (STDSGYGHSTTPPAPQTRITSNNWSPMTMPSM) are enriched in polar residues.

In terms of tissue distribution, mesoderm and notochord.

The protein resides in the nucleus. Its function is as follows. Involved in the transcriptional regulation of genes required for mesoderm formation and differentiation. This chain is T-box transcription factor T homolog 2, found in Branchiostoma floridae (Florida lancelet).